The primary structure comprises 206 residues: N-(5'-phosphoribosyl)anthranilate isomerase (206 aa).

Belongs to the TrpF family.

The catalysed reaction is N-(5-phospho-beta-D-ribosyl)anthranilate = 1-(2-carboxyphenylamino)-1-deoxy-D-ribulose 5-phosphate. Its pathway is amino-acid biosynthesis; L-tryptophan biosynthesis; L-tryptophan from chorismate: step 3/5. In Nitrosococcus oceani (strain ATCC 19707 / BCRC 17464 / JCM 30415 / NCIMB 11848 / C-107), this protein is N-(5'-phosphoribosyl)anthranilate isomerase.